We begin with the raw amino-acid sequence, 198 residues long: Dynein axonemal light chain 1 (198 aa).

4 LRR repeats span residues 49 to 70 (ACKHLALSTNNIEKISSLSGME), 71 to 92 (NLRILSLGRNLIKKIENLDAVA), 94 to 115 (TLEELWISYNQIASLSGIEKLV), and 116 to 137 (NLRVLYMSNNKITNWGEIDKLA). One can recognise an LRRCT domain in the interval 157–195 (KENNATSEYRIEVVKRLPNLKKLDGMPVDVDEREQANVA).

Belongs to the dynein light chain LC1-type family. In terms of assembly, interacts with OCAD2, a outer arm dynein heavy chain. Interacts with tubulin (previously called p45) located within the A-tubule of the outer doublets in a ATP-independent manner.

It is found in the cytoplasm. Its subcellular location is the cytoskeleton. It localises to the flagellum axoneme. Part of the multisubunit axonemal ATPase complexes that generate the force for flagellar motility and govern beat frequency. Component of the outer arm dynein (ODA). May be involved in a mechanosensory feedback mechanism controlling ODA activity based on external conformational cues by tethering the outer arm dynein heavy chain (ODA2) to the A-tubule of the outer doublet microtubules within the axoneme. This is Dynein axonemal light chain 1 from Chlamydomonas reinhardtii (Chlamydomonas smithii).